The chain runs to 441 residues: Histidine--tRNA ligase (441 aa).

It belongs to the class-II aminoacyl-tRNA synthetase family. In terms of assembly, homodimer.

It is found in the cytoplasm. It carries out the reaction tRNA(His) + L-histidine + ATP = L-histidyl-tRNA(His) + AMP + diphosphate + H(+). The chain is Histidine--tRNA ligase from Koribacter versatilis (strain Ellin345).